Here is a 317-residue protein sequence, read N- to C-terminus: Lipoyl synthase (317 aa).

The disordered stretch occupies residues 1–21 (MVTVIDTLARPRHPEKANRPE). Basic and acidic residues predominate over residues 12–21 (RHPEKANRPE). Residues Cys57, Cys62, Cys68, Cys83, Cys87, Cys90, and Ser296 each contribute to the [4Fe-4S] cluster site. The region spanning 69 to 285 (WEKKHATFMI…ETVAYAKGFL (217 aa)) is the Radical SAM core domain.

It belongs to the radical SAM superfamily. Lipoyl synthase family. It depends on [4Fe-4S] cluster as a cofactor.

The protein resides in the cytoplasm. It carries out the reaction [[Fe-S] cluster scaffold protein carrying a second [4Fe-4S](2+) cluster] + N(6)-octanoyl-L-lysyl-[protein] + 2 oxidized [2Fe-2S]-[ferredoxin] + 2 S-adenosyl-L-methionine + 4 H(+) = [[Fe-S] cluster scaffold protein] + N(6)-[(R)-dihydrolipoyl]-L-lysyl-[protein] + 4 Fe(3+) + 2 hydrogen sulfide + 2 5'-deoxyadenosine + 2 L-methionine + 2 reduced [2Fe-2S]-[ferredoxin]. It participates in protein modification; protein lipoylation via endogenous pathway; protein N(6)-(lipoyl)lysine from octanoyl-[acyl-carrier-protein]: step 2/2. Functionally, catalyzes the radical-mediated insertion of two sulfur atoms into the C-6 and C-8 positions of the octanoyl moiety bound to the lipoyl domains of lipoate-dependent enzymes, thereby converting the octanoylated domains into lipoylated derivatives. The chain is Lipoyl synthase from Xanthobacter autotrophicus (strain ATCC BAA-1158 / Py2).